A 65-amino-acid chain; its full sequence is Neuropeptide-like protein 28 (65 aa).

The N-terminal stretch at 1-22 (MISTSSILILVFLLACFMATSA) is a signal peptide. Tyrosine 29, tyrosine 39, tyrosine 47, and tyrosine 55 each carry tyrosine amide. Tryptophan 63 is modified (tryptophan amide).

Belongs to the YARP (YGGW-amide related peptide) family.

It localises to the secreted. Functionally, may have antimicrobial activity. This chain is Neuropeptide-like protein 28 (nlp-28), found in Caenorhabditis elegans.